The primary structure comprises 404 residues: Cysteine desulfurase IscS (404 aa).

Pyridoxal 5'-phosphate-binding positions include 75–76, Asn-155, Gln-183, and 203–205; these read AT and SAH. Lys-206 carries the N6-(pyridoxal phosphate)lysine modification. Thr-243 serves as a coordination point for pyridoxal 5'-phosphate. The Cysteine persulfide intermediate role is filled by Cys-328. Residue Cys-328 participates in [2Fe-2S] cluster binding.

The protein belongs to the class-V pyridoxal-phosphate-dependent aminotransferase family. NifS/IscS subfamily. As to quaternary structure, homodimer. Forms a heterotetramer with IscU, interacts with other sulfur acceptors. Pyridoxal 5'-phosphate serves as cofactor.

Its subcellular location is the cytoplasm. It catalyses the reaction (sulfur carrier)-H + L-cysteine = (sulfur carrier)-SH + L-alanine. It functions in the pathway cofactor biosynthesis; iron-sulfur cluster biosynthesis. Functionally, master enzyme that delivers sulfur to a number of partners involved in Fe-S cluster assembly, tRNA modification or cofactor biosynthesis. Catalyzes the removal of elemental sulfur atoms from cysteine to produce alanine. Functions as a sulfur delivery protein for Fe-S cluster synthesis onto IscU, an Fe-S scaffold assembly protein, as well as other S acceptor proteins. This Shewanella loihica (strain ATCC BAA-1088 / PV-4) protein is Cysteine desulfurase IscS.